Here is a 79-residue protein sequence, read N- to C-terminus: Moronecidin (79 aa).

Residues 1-22 (MKCATLSLVLSMVVLMAEPGDA) form the signal peptide. At Gly44 the chain carries Glycine amide. The interval 45–68 (GKAEQDQQDQQYQQDQQDQQAQQY) is disordered. Positions 47–79 (AEQDQQDQQYQQDQQDQQAQQYQRFNRERAAFD) are excised as a propeptide. Residues 52–68 (QDQQYQQDQQDQQAQQY) show a composition bias toward low complexity.

Expressed in gill, skin, intestine, spleen, anterior kidney, and blood cells.

The protein localises to the secreted. Antimicrobial peptide with broad-spectrum activity against Gram-positive and Gram-negative bacteria as well as against a variety of fungi. Rapidly inactivates both channel catfish herpesvirus (ED(50)=4 uM) and frog virus 3 (ED(50)=13 uM) over a wide temperature range. Seems to disrupt the membranes by adopting an alpha helical conformation. In Morone chrysops (White bass), this protein is Moronecidin.